A 145-amino-acid polypeptide reads, in one-letter code: 3-hydroxyacyl-[acyl-carrier-protein] dehydratase FabZ (145 aa).

His47 is an active-site residue.

This sequence belongs to the thioester dehydratase family. FabZ subfamily.

It is found in the cytoplasm. It catalyses the reaction a (3R)-hydroxyacyl-[ACP] = a (2E)-enoyl-[ACP] + H2O. In terms of biological role, involved in unsaturated fatty acids biosynthesis. Catalyzes the dehydration of short chain beta-hydroxyacyl-ACPs and long chain saturated and unsaturated beta-hydroxyacyl-ACPs. In Vesicomyosocius okutanii subsp. Calyptogena okutanii (strain HA), this protein is 3-hydroxyacyl-[acyl-carrier-protein] dehydratase FabZ.